The following is a 295-amino-acid chain: tRNA-cytidine(32) 2-sulfurtransferase (295 aa).

Residues S63–S68 carry the PP-loop motif motif. Residues C138, C141, and C229 each coordinate [4Fe-4S] cluster.

Belongs to the TtcA family. In terms of assembly, homodimer. It depends on Mg(2+) as a cofactor. [4Fe-4S] cluster is required as a cofactor.

Its subcellular location is the cytoplasm. The catalysed reaction is cytidine(32) in tRNA + S-sulfanyl-L-cysteinyl-[cysteine desulfurase] + AH2 + ATP = 2-thiocytidine(32) in tRNA + L-cysteinyl-[cysteine desulfurase] + A + AMP + diphosphate + H(+). The protein operates within tRNA modification. In terms of biological role, catalyzes the ATP-dependent 2-thiolation of cytidine in position 32 of tRNA, to form 2-thiocytidine (s(2)C32). The sulfur atoms are provided by the cysteine/cysteine desulfurase (IscS) system. The sequence is that of tRNA-cytidine(32) 2-sulfurtransferase from Hyphomonas neptunium (strain ATCC 15444).